The primary structure comprises 553 residues: MRSAIIKEGPERAANRSLLKATGVTDSEMKKPFIAVVNSWNEIVPGHIHLDKLAEAVKAGIRNAGGVPFEFHTIGVCDGLAMGHEGMKYSLPSREVIEDTIELMVRAHQFDGMVLIPTCDKIVPGHLMAAGRLDIPAIVVTGGPMLPGYVDDKYTDLISVFEGVGAYSAGKLSEAELKRLENLSCAGAGSCAGMFTANTMACMTEALGLSLPGCATAHAVDAKKVRIAKESGERIVALVKENLTPRKIVTQKSFENAIMVDMAVGGSTNTTLHLPALAHEFGLELPLKTFDELSRTTPHLISLRPGGPNFMLHFDRAGGVEAVVQRLASKLHLDQLTVNGKTIGENLDELEIVNPKLNAEIITTLENPIHAEGGIAVLKGSLAPDGSVVKQAAVDPKMRVHTGPAKVYDCEEDAMKSILAGDVKPGDIVVIRYEGPKGGPGMREMLAATAAIGGMGLLESVALITDGRFSGGTRGPCIGHVSPEASEGGPIGLVKDGDLIEINIPERILNLKVTEEELEKRKAAFVPPKKEVTGYLARYQRSVHSANTGGIVD.

Aspartate 78 lines the Mg(2+) pocket. Residue cysteine 119 participates in [2Fe-2S] cluster binding. Mg(2+) is bound by residues aspartate 120 and lysine 121. Residue lysine 121 is modified to N6-carboxylysine. Cysteine 191 is a binding site for [2Fe-2S] cluster. Position 444 (glutamate 444) interacts with Mg(2+). Residue serine 470 is the Proton acceptor of the active site.

The protein belongs to the IlvD/Edd family. As to quaternary structure, homodimer. It depends on [2Fe-2S] cluster as a cofactor. Mg(2+) serves as cofactor.

The catalysed reaction is (2R)-2,3-dihydroxy-3-methylbutanoate = 3-methyl-2-oxobutanoate + H2O. It carries out the reaction (2R,3R)-2,3-dihydroxy-3-methylpentanoate = (S)-3-methyl-2-oxopentanoate + H2O. It participates in amino-acid biosynthesis; L-isoleucine biosynthesis; L-isoleucine from 2-oxobutanoate: step 3/4. The protein operates within amino-acid biosynthesis; L-valine biosynthesis; L-valine from pyruvate: step 3/4. Functions in the biosynthesis of branched-chain amino acids. Catalyzes the dehydration of (2R,3R)-2,3-dihydroxy-3-methylpentanoate (2,3-dihydroxy-3-methylvalerate) into 2-oxo-3-methylpentanoate (2-oxo-3-methylvalerate) and of (2R)-2,3-dihydroxy-3-methylbutanoate (2,3-dihydroxyisovalerate) into 2-oxo-3-methylbutanoate (2-oxoisovalerate), the penultimate precursor to L-isoleucine and L-valine, respectively. The chain is Dihydroxy-acid dehydratase 1 from Methanosarcina acetivorans (strain ATCC 35395 / DSM 2834 / JCM 12185 / C2A).